We begin with the raw amino-acid sequence, 329 residues long: Thiamine thiazole synthase (329 aa).

Residues Cys-86, 107-108 (EA), Gly-115, and Val-180 each bind substrate. Cys-218 is modified (2,3-didehydroalanine (Cys)). Residues Asp-220, His-235, Met-287, and 297–299 (RMG) each bind substrate.

It belongs to the THI4 family. Homooctamer. Fe cation is required as a cofactor. In terms of processing, during the catalytic reaction, a sulfide is transferred from Cys-218 to a reaction intermediate, generating a dehydroalanine residue.

The protein localises to the cytoplasm. The protein resides in the nucleus. It catalyses the reaction [ADP-thiazole synthase]-L-cysteine + glycine + NAD(+) = [ADP-thiazole synthase]-dehydroalanine + ADP-5-ethyl-4-methylthiazole-2-carboxylate + nicotinamide + 3 H2O + 2 H(+). Functionally, involved in biosynthesis of the thiamine precursor thiazole. Catalyzes the conversion of NAD and glycine to adenosine diphosphate 5-(2-hydroxyethyl)-4-methylthiazole-2-carboxylic acid (ADT), an adenylated thiazole intermediate. The reaction includes an iron-dependent sulfide transfer from a conserved cysteine residue of the protein to a thiazole intermediate. The enzyme can only undergo a single turnover, which suggests it is a suicide enzyme. May have additional roles in adaptation to various stress conditions and in DNA damage tolerance. This Phaeosphaeria nodorum (strain SN15 / ATCC MYA-4574 / FGSC 10173) (Glume blotch fungus) protein is Thiamine thiazole synthase.